Reading from the N-terminus, the 295-residue chain is Large ribosomal subunit protein uL2 (295 aa).

Residues 243–295 (WRPHTRGTAMNPVDHPHGGGEGRTRGKHPESPWDGRRRDTRREGVRSTPISLS) form a disordered region. Residues 256–287 (DHPHGGGEGRTRGKHPESPWDGRRRDTRREGV) are compositionally biased toward basic and acidic residues.

Belongs to the universal ribosomal protein uL2 family. As to quaternary structure, part of the 50S ribosomal subunit. Forms a bridge to the 30S subunit in the 70S ribosome.

One of the primary rRNA binding proteins. Required for association of the 30S and 50S subunits to form the 70S ribosome, for tRNA binding and peptide bond formation. It has been suggested to have peptidyltransferase activity; this is somewhat controversial. Makes several contacts with the 16S rRNA in the 70S ribosome. The sequence is that of Large ribosomal subunit protein uL2 from Aquifex pyrophilus.